The sequence spans 312 residues: MAKMFSFILVTTALVMGRGSSALENCLQEQARLRAQVYLLETRVKQQQVKISQLLHEKQVQLLDKGEENSVIDLGGKRQYADCSEIFNDGYKQSGFYKIKPLQSPAEFSVYCDMSDGGGWTVIQRRSDGSENFNRDWSDYENGFGNFVQKNGEYWLGNRNLHLLTTQGDYTLKIDLADFEKNSRYAQYKNFKVGDEKNSYDLHIGEYSGTAGDSLTGNFHPEVQWWASHQRMKFSTWDRDNDNYEGNCAKEDQSGWWFNRCHSANLNGFYHKGPYTAKTDNGIVWHTWHGWWYSLKSVVMKIRPNDFIPNIV.

The N-terminal stretch at 1–22 (MAKMFSFILVTTALVMGRGSSA) is a signal peptide. A coiled-coil region spans residues 39 to 60 (LLETRVKQQQVKISQLLHEKQV). The Fibrinogen C-terminal domain occupies 74 to 306 (LGGKRQYADC…SVVMKIRPND (233 aa)). Intrachain disulfides connect Cys83–Cys112 and Cys248–Cys261.

In terms of assembly, homodimer. Interacts (via the Fibrinogen C-terminal domain) with LAG3 (via Ig-like domains 1 and 2).

The protein resides in the secreted. In terms of biological role, immune suppressive molecule that inhibits antigen-specific T-cell activation by acting as a major ligand of LAG3. Responsible for LAG3 T-cell inhibitory function. Binds LAG3 independently from MHC class II (MHC-II). Secreted by, and promotes growth of, hepatocytes. The sequence is that of Fibrinogen-like protein 1 (FGL1) from Bos taurus (Bovine).